The primary structure comprises 479 residues: uncharacterized protein (479 aa).

10 helical membrane-spanning segments follow: residues 11–31, 43–63, 90–110, 151–171, 195–215, 223–243, 274–294, 295–315, 328–348, and 447–467; these read ILMA…LSLI, IVGL…AIAV, GTTW…ITGL, SGGI…SDPE, IFLT…PILG, WFLA…LICY, KALS…NSLH, INAT…SIVT, TLVW…SGFF, and WWIT…TIGM.

It belongs to the SLC13A/DASS transporter (TC 2.A.47) family. DIT1 subfamily.

The protein localises to the cell inner membrane. This is an uncharacterized protein from Haemophilus influenzae (strain ATCC 51907 / DSM 11121 / KW20 / Rd).